Consider the following 474-residue polypeptide: Gamma-aminobutyric acid receptor subunit beta-1 (474 aa).

An N-terminal signal peptide occupies residues 1–25; that stretch reads MWTVQNRESLGLLSFPVMIAMVCCA. The Extracellular segment spans residues 26–245; the sequence is HSANEPSNMS…SFRLKRNIGY (220 aa). Residues N33 and N105 are each glycosylated (N-linked (GlcNAc...) asparagine). Y122 serves as a coordination point for histamine. A disulfide bridge connects residues C161 and C175. An N-linked (GlcNAc...) asparagine glycan is attached at N174. Residues 181–182 and T227 each bind histamine; that span reads SY. The 4-aminobutanoate site is built by Y182 and T227. 3 consecutive transmembrane segments (helical) span residues 246–267, 271–293, and 305–327; these read FILQ…SFWI, ASAA…STHL, and AIDI…YAFV. Residues 328–451 lie on the Cytoplasmic side of the membrane; sequence NYIFFGKGPQ…DLTDVNSIDK (124 aa). A helical membrane pass occupies residues 452-473; the sequence is WSRMFFPITFSLFNVVYWLYYV.

The protein belongs to the ligand-gated ion channel (TC 1.A.9) family. Gamma-aminobutyric acid receptor (TC 1.A.9.5) subfamily. GABRB1 sub-subfamily. Heteropentamer, formed by a combination of alpha (GABRA1-6), beta (GABRB1-3), gamma (GABRG1-3), delta (GABRD), epsilon (GABRE), rho (GABRR1-3), pi (GABRP) and theta (GABRQ) chains, each subunit exhibiting distinct physiological and pharmacological properties. Binds UBQLN1.

It is found in the postsynaptic cell membrane. The protein resides in the cell membrane. It catalyses the reaction chloride(in) = chloride(out). Its activity is regulated as follows. Potentiated by histamine. Its function is as follows. Beta subunit of the heteropentameric ligand-gated chloride channel gated by gamma-aminobutyric acid (GABA), a major inhibitory neurotransmitter in the brain. GABA-gated chloride channels, also named GABA(A) receptors (GABAAR), consist of five subunits arranged around a central pore and contain GABA active binding site(s) located at the alpha and beta subunit interface(s). When activated by GABA, GABAARs selectively allow the flow of chloride anions across the cell membrane down their electrochemical gradient. Chloride influx into the postsynaptic neuron following GABAAR opening decreases the neuron ability to generate a new action potential, thereby reducing nerve transmission. Beta-containing GABAARs can simultaneously bind GABA and histamine where histamine binds at the interface of two neighboring beta subunits, which may be involved in the regulation of sleep and wakefulness. This Bos taurus (Bovine) protein is Gamma-aminobutyric acid receptor subunit beta-1 (GABRB1).